The primary structure comprises 670 residues: DNA ligase (670 aa).

NAD(+) is bound by residues 32–36 (DSEYD), 81–82 (SL), and Glu-114. Catalysis depends on Lys-116, which acts as the N6-AMP-lysine intermediate. Positions 137, 174, 291, and 315 each coordinate NAD(+). 4 residues coordinate Zn(2+): Cys-409, Cys-412, Cys-427, and Cys-433. Positions 592-670 (ASENLFKDKT…EEEFLAQITR (79 aa)) constitute a BRCT domain.

It belongs to the NAD-dependent DNA ligase family. LigA subfamily. Mg(2+) serves as cofactor. It depends on Mn(2+) as a cofactor.

The enzyme catalyses NAD(+) + (deoxyribonucleotide)n-3'-hydroxyl + 5'-phospho-(deoxyribonucleotide)m = (deoxyribonucleotide)n+m + AMP + beta-nicotinamide D-nucleotide.. DNA ligase that catalyzes the formation of phosphodiester linkages between 5'-phosphoryl and 3'-hydroxyl groups in double-stranded DNA using NAD as a coenzyme and as the energy source for the reaction. It is essential for DNA replication and repair of damaged DNA. The sequence is that of DNA ligase from Haemophilus influenzae (strain ATCC 51907 / DSM 11121 / KW20 / Rd).